Reading from the N-terminus, the 311-residue chain is Haloalkane dehalogenase (311 aa).

In terms of domain architecture, AB hydrolase-1 spans 30–148; that stretch reads AIVFQHGNPS…WDDFPDEVAQ (119 aa). Asp-107 (nucleophile) is an active-site residue. The Proton donor role is filled by Glu-131. The Proton acceptor role is filled by His-272.

This sequence belongs to the haloalkane dehalogenase family. Type 2 subfamily. As to quaternary structure, monomer.

It carries out the reaction 1-haloalkane + H2O = a halide anion + a primary alcohol + H(+). Its function is as follows. Catalyzes hydrolytic cleavage of carbon-halogen bonds in halogenated aliphatic compounds, leading to the formation of the corresponding primary alcohols, halide ions and protons. The protein is Haloalkane dehalogenase of Mycolicibacterium smegmatis (strain ATCC 700084 / mc(2)155) (Mycobacterium smegmatis).